We begin with the raw amino-acid sequence, 125 residues long: Methylglyoxal synthase (125 aa).

Positions 1–125 (MTERLRIALI…TAEKLIKALD (125 aa)) constitute an MGS-like domain. Residues H12, K16, 38-41 (TGTT), and 59-60 (SG) contribute to the substrate site. D65 (proton donor/acceptor) is an active-site residue. H92 is a binding site for substrate.

It belongs to the methylglyoxal synthase family.

It carries out the reaction dihydroxyacetone phosphate = methylglyoxal + phosphate. Functionally, catalyzes the formation of methylglyoxal from dihydroxyacetone phosphate. This Brucella anthropi (strain ATCC 49188 / DSM 6882 / CCUG 24695 / JCM 21032 / LMG 3331 / NBRC 15819 / NCTC 12168 / Alc 37) (Ochrobactrum anthropi) protein is Methylglyoxal synthase.